The primary structure comprises 111 residues: 2Fe-2S ferredoxin (111 aa).

The 2Fe-2S ferredoxin-type domain maps to 1–104 (MPKIFFLPHK…DIEVQIPLYN (104 aa)). The [2Fe-2S] cluster site is built by C42, C48, C51, and C87.

It belongs to the adrenodoxin/putidaredoxin family. The cofactor is [2Fe-2S] cluster.

Functionally, ferredoxin are iron-sulfur proteins that transfer electrons in a wide variety of metabolic reactions. In Buchnera aphidicola subsp. Schizaphis graminum (strain Sg), this protein is 2Fe-2S ferredoxin (fdx).